The chain runs to 984 residues: UPF0592 protein YDL073W (984 aa).

The interval 675–712 (KNHKIMDGYEGGQENEDNDEDSEDSGSHKNKRKEGNSS) is disordered. Over residues 687–698 (QENEDNDEDSED) the composition is skewed to acidic residues.

Belongs to the UPF0592 family.

The chain is UPF0592 protein YDL073W from Saccharomyces cerevisiae (strain ATCC 204508 / S288c) (Baker's yeast).